A 314-amino-acid polypeptide reads, in one-letter code: Ribosomal RNA small subunit methyltransferase H (314 aa).

S-adenosyl-L-methionine is bound by residues 58-60, D76, F103, D119, and Q126; that span reads GGH.

It belongs to the methyltransferase superfamily. RsmH family.

It localises to the cytoplasm. The catalysed reaction is cytidine(1402) in 16S rRNA + S-adenosyl-L-methionine = N(4)-methylcytidine(1402) in 16S rRNA + S-adenosyl-L-homocysteine + H(+). Its function is as follows. Specifically methylates the N4 position of cytidine in position 1402 (C1402) of 16S rRNA. In Gloeobacter violaceus (strain ATCC 29082 / PCC 7421), this protein is Ribosomal RNA small subunit methyltransferase H.